The chain runs to 339 residues: Nucleoid-associated protein Asuc_0779 (339 aa).

The protein belongs to the YejK family.

Its subcellular location is the cytoplasm. It localises to the nucleoid. This Actinobacillus succinogenes (strain ATCC 55618 / DSM 22257 / CCUG 43843 / 130Z) protein is Nucleoid-associated protein Asuc_0779.